Consider the following 416-residue polypeptide: MVSSLPKESQAELQLFQNEINAANPSDFLQFSANYFNKRLEQQRAFLKAREPEFKAKNIVLFPEPEESFSRPQSAQSQSRSRSSVMFKSPFVNEDPHSNVFKSGFNLDPHEQDTHQQAQEEQQHTREKTSTPPLPMHFNAQRRTSVSGETLQPNNFDDWTPDHYKEKSEQQLQRLEKSIRNNFLFNKLDSDSKRLVINCLEEKSVPKGATIIKQGDQGDYFYVVEKGTVDFYVNDNKVNSSGPGSSFGELALMYNSPRAATVVATSDCLLWALDRLTFRKILLGSSFKKRLMYDDLLKSMPVLKSLTTYDRAKLADALDTKIYQPGETIIREGDQGENFYLIEYGAVDVSKKGQGVINKLKDHDYFGEVALLNDLPRQATVTATKRTKVATLGKSGFQRLLGPAVDVLKLNDPTRH.

The segment at 2 to 183 (VSSLPKESQA…RLEKSIRNNF (182 aa)) is dimerization and phosphorylation. Phosphoserine is present on residues serine 3, serine 4, serine 9, serine 68, serine 70, serine 74, serine 77, serine 79, serine 81, serine 83, and serine 84. The interval 8 to 45 (ESQAELQLFQNEINAANPSDFLQFSANYFNKRLEQQRA) is dimerization/docking domain (D/D). Residues 65–138 (PEESFSRPQS…TSTPPLPMHF (74 aa)) form a disordered region. A compositionally biased stretch (low complexity) spans 70-84 (SRPQSAQSQSRSRSS). Threonine 129 carries the post-translational modification Phosphothreonine. Residue serine 130 is modified to Phosphoserine. Threonine 131 and threonine 144 each carry phosphothreonine. The short motif at 142-146 (RRTSV) is the Inhibitor sequence (IS) element. The residue at position 145 (serine 145) is a Phosphoserine; by autocatalysis. The residue at position 147 (serine 147) is a Phosphoserine. A phosphothreonine mark is found at threonine 150 and threonine 160. 3',5'-cyclic AMP is bound by residues 184–301 (LFNK…KSMP), glutamate 249, arginine 258, 302–416 (VLKS…PTRH), glutamate 368, and arginine 377.

This sequence belongs to the cAMP-dependent kinase regulatory chain family. In terms of assembly, the inactive holoenzyme of cAMP-dependent protein kinase is a tetramer, composed of 2 regulatory subunits (R, encoded by BCY1) and two catalytic subunits (C, encoded by the 3 partially redundant TPK1, TPK2, and TPK3 genes). Activation by cAMP causes dissociation of the holoenzyme, producing 2 active catalytic monomers C and a regulatory dimer R(2). Phosphorylated by YAK1 in response to glucose starvation. Phosphorylated by MCK1 at Thr-129 upon TOR complex 1 (TORC1) inhibition. Thr-129 phosphorylation activates BCY1 to inhibit PKA. TORC1 inhibits phosphorylation of RxxS/T sites but has no effect on Ser-145 phosphorylation. The phosphorylation sites can be clustered in several groups, all localized in the N-terminal part. The first cluster termed cluster I (CI) is located close to the N-terminus and includes Ser-3, Ser-4 and Ser-9. The second includes Ser-68, Ser-70, Ser-74, Ser-77, Ser-79, Ser-81, Ser-83, and Ser-84. This cluster of phosphorylation sites, termed cluster II (CII), is important for BCY1 cytoplasmic localization and function. The third cluster of phosphorylated residues consists of Thr-144, Ser-145, Ser-147, Thr-150, and Thr-160. This cluster falls within or near the so-called autoinhibitory domain where the catalytic subunit of PKA autophosphorylates the highly conserved Ser-145 to inhibit BCY1. A last cluster of phosphorylated residues included Thr-129, Ser-130, and Thr-131 and is termed cluster III (CIII). Sites in CIII (and to a lesser extent in CII) are hyperphosphorylated in response to rapamycin.

The protein localises to the cytoplasm. It localises to the nucleus. Its function is as follows. Regulatory subunit of the cyclic AMP-dependent protein kinase (PKA), an effector of the Ras/cAMP pathway. Inhibits PKA activity in the absence of cAMP. cAMP activates PKA and promotes growth and proliferation in response to good nutrient conditions. Together with ZDS1, provides a negative feedback control on the cell wall integrity-signaling pathway by acting as a negative regulator of MAP kinase SLT2/MPK1. This Saccharomyces cerevisiae (strain ATCC 204508 / S288c) (Baker's yeast) protein is cAMP-dependent protein kinase regulatory subunit (BCY1).